A 283-amino-acid chain; its full sequence is Lectin-like protein At1g53080 (283 aa).

The signal sequence occupies residues 1–23 (MQIHKLCIFVLFISLLSSKTISA). The tract at residues 24–277 (VKFNFNRFDG…RHDIWSWSFE (254 aa)) is legume-lectin like. N-linked (GlcNAc...) asparagine glycosylation is found at Asn-84 and Asn-138. Ser-247 carries the post-translational modification Phosphoserine.

This sequence belongs to the leguminous lectin family.

Its subcellular location is the secreted. It localises to the extracellular space. It is found in the apoplast. The chain is Lectin-like protein At1g53080 from Arabidopsis thaliana (Mouse-ear cress).